Consider the following 193-residue polypeptide: Probable chorismate pyruvate-lyase (193 aa).

Arg-81, Leu-119, and Glu-177 together coordinate substrate.

This sequence belongs to the UbiC family.

The protein resides in the cytoplasm. The enzyme catalyses chorismate = 4-hydroxybenzoate + pyruvate. It participates in cofactor biosynthesis; ubiquinone biosynthesis. In terms of biological role, removes the pyruvyl group from chorismate, with concomitant aromatization of the ring, to provide 4-hydroxybenzoate (4HB) for the ubiquinone pathway. The protein is Probable chorismate pyruvate-lyase of Idiomarina loihiensis (strain ATCC BAA-735 / DSM 15497 / L2-TR).